The following is a 117-amino-acid chain: uncharacterized protein (117 aa).

The first 22 residues, 1 to 22 (MHVKYLAGIVGAALLMAGCSSS), serve as a signal peptide directing secretion.

This is an uncharacterized protein from Escherichia coli O6:H1 (strain CFT073 / ATCC 700928 / UPEC).